Here is a 223-residue protein sequence, read N- to C-terminus: Transcriptional regulatory protein HprR (223 aa).

A Response regulatory domain is found at Lys2 to Leu115. Asp51 bears the 4-aspartylphosphate mark. Residues Asn122–Ala220 constitute a DNA-binding region (ompR/PhoB-type).

In terms of processing, phosphorylated by HprS.

It localises to the cytoplasm. In terms of biological role, member of a two-component regulatory system HprR/HprS involved in response to hydrogen peroxide. Regulates the expression of at least 5 operons, cyoABCDE, hprRS, hiuH, cusRS and cusCFBA. Bifunctional regulator that acts as an activator and a repressor. The polypeptide is Transcriptional regulatory protein HprR (Escherichia coli (strain K12)).